The primary structure comprises 456 residues: MTOR-associated protein MEAK7 (456 aa).

Gly-2 carries the N-myristoyl glycine lipid modification. The region spanning 244 to 412 (SILDVLSVMY…FDKMEVWAVG (169 aa)) is the TLDc domain.

Interacts (via C-terminal domain) with MTOR and MLST8; the interaction with MTOR increases upon nutrient stimulation.

It is found in the membrane. The protein resides in the cytoplasm. It localises to the lysosome. Its function is as follows. Activates an alternative mTOR signaling through RPS6KB2 activation and EIF4EBP1 repression to regulate cell proliferation and migration. Recruits MTOR at the lysosome, essential for MTOR signaling at the lysosome. This is MTOR-associated protein MEAK7 from Homo sapiens (Human).